Here is a 647-residue protein sequence, read N- to C-terminus: Solute carrier family 23 member 2 (647 aa).

Residues 1 to 11 show a composition bias toward polar residues; the sequence is MMGVGKNTSKS. Residues 1–26 form a disordered region; that stretch reads MMGVGKNTSKSVEVGGSTEGKYEEEA. Over 8–109 the chain is Cytoplasmic; sequence TSKSVEVGGS…LCIFLGLQHY (102 aa). Position 69 is a phosphoserine (serine 69). Threonine 74 carries the phosphothreonine modification. Serine 77 bears the Phosphoserine mark. Threonine 78 is subject to Phosphothreonine. Serine 80 is modified (phosphoserine). A helical membrane pass occupies residues 110-130; that stretch reads LTCFSGTIAVPFLLADAMCVG. Topologically, residues 131-138 are extracellular; sequence DDQWATSQ. The chain crosses the membrane as a helical span at residues 139–159; the sequence is LIGTIFFCVGITTLLQTTFGC. Position 160 (arginine 160) is a topological domain, cytoplasmic. The helical transmembrane segment at 161–181 threads the bilayer; the sequence is LPLFQASAFAFLAPARAILSL. Over 182-215 the chain is Extracellular; that stretch reads DKWKCNTTEITVANGTAELLEHIWHPRIQEIQGA. N-linked (GlcNAc...) asparagine glycosylation is found at asparagine 187 and asparagine 195. The helical transmembrane segment at 216–236 threads the bilayer; the sequence is IIMSSLIEVVIGLLGLPGALL. Over 237-263 the chain is Cytoplasmic; the sequence is RYIGPLTITPTVALIGLSGFQAAGERA. A helical transmembrane segment spans residues 264-281; it reads GKHWGIAMLTIFLVLLFS. The Extracellular segment spans residues 282–285; sequence QYAR. Positions 286–299 form an intramembrane region, helical; it reads NVKFPLPIYKSKKG. Over 300-306 the chain is Extracellular; that stretch reads WTAYKLQ. Residues 307 to 327 traverse the membrane as a helical segment; the sequence is LFKMFPIILAILVSWLLCFIF. The Cytoplasmic portion of the chain corresponds to 328-368; the sequence is TVTDVFPSNSTDYGYYARTDARKGVLLVAPWFKVPYPFQWG. The chain crosses the membrane as a helical span at residues 369–389; sequence MPTVSAAGVIGMLSAVVASII. The Extracellular segment spans residues 390–414; sequence ESIGDYYACARLSCAPPPPIHAINR. The helical transmembrane segment at 415-435 threads the bilayer; the sequence is GIFVEGLSCVLDGVFGTGNGS. The Cytoplasmic portion of the chain corresponds to 436–458; the sequence is TSSSPNIGVLGITKVGSRRVIQY. The chain crosses the membrane as a helical span at residues 459–479; the sequence is GAALMLGLGMIGKFSALFASL. The Extracellular portion of the chain corresponds to 480–482; sequence PDP. The helical transmembrane segment at 483–503 threads the bilayer; the sequence is VLGALFCTLFGMITAVGLSNL. The Cytoplasmic portion of the chain corresponds to 504–513; that stretch reads QFIDLNSSRN. A helical transmembrane segment spans residues 514 to 534; it reads LFVLGFSIFFGLVLPSYLRQN. Residues 535–544 lie on the Extracellular side of the membrane; it reads PLVTGITGID. A helical membrane pass occupies residues 545–565; that stretch reads QVLNVLLTTAMFVGGCVAFIL. At 566-647 the chain is on the cytoplasmic side; sequence DNTIPGTPEE…SSDKDSQATV (82 aa). Threonine 646 carries the post-translational modification Phosphothreonine.

Belongs to the nucleobase:cation symporter-2 (NCS2) (TC 2.A.40) family. As to quaternary structure, interacts with CLSTN3. Post-translationally, phosphorylated. Highly expressed in neural, neuroendocrine, exocrine and endothelial tissues and in osteoblasts. Detected in neurons throughout the central nervous system, in meninges and choroid plexus, in the anterior pituitary, the intermediate lobe, in pancreas, adrenal cortex, gastric glands, and in the inner nuclear layer of the retina.

It localises to the cell membrane. The catalysed reaction is L-ascorbate(out) + 2 Na(+)(out) = L-ascorbate(in) + 2 Na(+)(in). Sodium/ascorbate cotransporter. Mediates electrogenic uptake of vitamin C, with a stoichiometry of 2 Na(+) for each ascorbate. The chain is Solute carrier family 23 member 2 (Slc23a2) from Rattus norvegicus (Rat).